The primary structure comprises 245 residues: Ribonuclease PH (245 aa).

Residues Arg-87 and 125–127 (GTR) each bind phosphate.

Belongs to the RNase PH family. Homohexameric ring arranged as a trimer of dimers.

The catalysed reaction is tRNA(n+1) + phosphate = tRNA(n) + a ribonucleoside 5'-diphosphate. Functionally, phosphorolytic 3'-5' exoribonuclease that plays an important role in tRNA 3'-end maturation. Removes nucleotide residues following the 3'-CCA terminus of tRNAs; can also add nucleotides to the ends of RNA molecules by using nucleoside diphosphates as substrates, but this may not be physiologically important. Probably plays a role in initiation of 16S rRNA degradation (leading to ribosome degradation) during starvation. The chain is Ribonuclease PH from Streptomyces coelicolor (strain ATCC BAA-471 / A3(2) / M145).